The sequence spans 150 residues: UPF0506 protein SJCHGC09643 (150 aa).

An N-terminal signal peptide occupies residues 1-18; the sequence is MNTCIQLLILCLVTVINS. N-linked (GlcNAc...) asparagine glycosylation is found at Asn20, Asn32, Asn48, and Asn110. Intrachain disulfides connect Cys116/Cys130, Cys123/Cys134, and Cys129/Cys139.

This sequence belongs to the UPF0506 family.

It is found in the secreted. The polypeptide is UPF0506 protein SJCHGC09643 (Schistosoma japonicum (Blood fluke)).